A 340-amino-acid chain; its full sequence is UPF0324 membrane protein BC_5174 (340 aa).

10 helical membrane passes run 13–35 (FGFSQGIGITLLIAIAAKYLAEL), 40–59 (IMGQLVIAILIGMVWRAAIG), 99–118 (VLVIAAVVITFTIFVVYGLT), 128–150 (GILTACGTAICGAAAVVAIAPQV), 157–179 (TAVGAAIIAILGTIFTLIYTLLY), 189–211 (YGVFSGATLHEIAHVIAAAAPGG), 218–240 (AVIVKLTRVAMLVPVAILIGLWF), 255–277 (LPIPWFIFGFLAMSAVHSLGIIP), 279–301 (VVAGYIVVLAYMLIAMAMAGLGL), and 316–338 (FVAGLIGSVCLSVLGYVLVYALG).

Belongs to the UPF0324 family.

Its subcellular location is the cell membrane. The chain is UPF0324 membrane protein BC_5174 from Bacillus cereus (strain ATCC 14579 / DSM 31 / CCUG 7414 / JCM 2152 / NBRC 15305 / NCIMB 9373 / NCTC 2599 / NRRL B-3711).